The following is a 495-amino-acid chain: MTLNMMLDNAVPEAIAGALTQQHPGLFFTMVEQASVAISLTDARANIIYANPAFCRQTGYSLAQLLNQNPRLLASSQTPREIYQEMWQTLLQRQPWRGQLINQRRDGGLYLVDIDITPVLNPQGELEHYLAMQRDISVSYTLEQRLRNHMTLMEAVLNNIPAAVVVVDEQDRVVMDNLAYKTFCADCGGKELLVELQVSPRKMGPGAEQILPVVVRGAVRWLSVTCWALPGVSEEASRYFVDSAPARTLMVIADCTQQRQQQEQGRLDRLKQQMTAGKLLAAIRESLDAALIQLNCPINMLAAARRLNGEGSGNVALDAAWREGEEAMARLQRCRPSLELESNAVWPLQPFFDDLYALYRTRFDDRARLQVDMASPHLVGFGQRTQLLACLSLWLDRTLALAAELPSVPLEIELYAEEDEGWLSLYLNDNVPLLQVRYAHSPDALNSPGKGMELRLIQTLVAYHRGAIELASRPQGGTSLVLRFPLFNTLTGGEQ.

Positions histidine 23 to arginine 93 constitute a PAS 1 domain. The region spanning glutamine 94–asparagine 148 is the PAC domain. The PAS 2; truncated domain maps to threonine 151–valine 174.

Functionally, required for the inhibition of NifA activity in response to oxygen and low level of fixed nitrogen. This chain is Nitrogen fixation regulatory protein (nifL), found in Klebsiella oxytoca.